A 218-amino-acid polypeptide reads, in one-letter code: Adenylate kinase (218 aa).

10-15 (GAGKGT) provides a ligand contact to ATP. The interval 30-59 (STGDMLRAAVKAGTPLGLEAKKVMDAGGLV) is NMP. AMP-binding positions include T31, R36, 57–59 (GLV), 85–88 (GFPR), and Q92. Residues 122–159 (ERRVHPASGRSYHVRFNPPKAEGVDDVTGEPLVQRDDD) are LID. ATP is bound by residues R123 and 132-133 (SY). Positions 156 and 167 each coordinate AMP. G203 lines the ATP pocket.

This sequence belongs to the adenylate kinase family. In terms of assembly, monomer.

It localises to the cytoplasm. The catalysed reaction is AMP + ATP = 2 ADP. Its pathway is purine metabolism; AMP biosynthesis via salvage pathway; AMP from ADP: step 1/1. In terms of biological role, catalyzes the reversible transfer of the terminal phosphate group between ATP and AMP. Plays an important role in cellular energy homeostasis and in adenine nucleotide metabolism. The chain is Adenylate kinase from Bordetella pertussis (strain Tohama I / ATCC BAA-589 / NCTC 13251).